Here is a 336-residue protein sequence, read N- to C-terminus: PTS system glucitol/sorbitol-specific EIIB component (336 aa).

A PTS EIIB type-5 domain is found at K3–L195. C75 functions as the Phosphocysteine intermediate; for EIIB activity in the catalytic mechanism. C75 is subject to Phosphocysteine; by EIIA. Helical transmembrane passes span I194 to G214, G228 to G248, G250 to I270, A278 to A298, and V312 to I332.

It is found in the cell membrane. It catalyses the reaction D-sorbitol(out) + N(pros)-phospho-L-histidyl-[protein] = D-sorbitol 6-phosphate(in) + L-histidyl-[protein]. In terms of biological role, the phosphoenolpyruvate-dependent sugar phosphotransferase system (sugar PTS), a major carbohydrate active transport system, catalyzes the phosphorylation of incoming sugar substrates concomitantly with their translocation across the cell membrane. The enzyme II complex composed of SrlA, SrlB and SrlE is involved in glucitol/sorbitol transport. This is PTS system glucitol/sorbitol-specific EIIB component (srlE) from Clostridium beijerinckii (strain ATCC 51743 / NCIMB 8052) (Clostridium acetobutylicum).